A 364-amino-acid polypeptide reads, in one-letter code: D-alanine--D-alanine ligase A (364 aa).

In terms of domain architecture, ATP-grasp spans 145–348 (KRLLRDAGLN…YTDLISRLIE (204 aa)). 175 to 230 (ESRLGLPLFVKPANQGSSVGVSKVANEAQYQQAVALAFEFDHKVVVEQGIKGREIE) lines the ATP pocket. Mg(2+)-binding residues include Asp302, Glu315, and Asn317.

It belongs to the D-alanine--D-alanine ligase family. It depends on Mg(2+) as a cofactor. Mn(2+) serves as cofactor.

It is found in the cytoplasm. It carries out the reaction 2 D-alanine + ATP = D-alanyl-D-alanine + ADP + phosphate + H(+). It participates in cell wall biogenesis; peptidoglycan biosynthesis. In terms of biological role, cell wall formation. The chain is D-alanine--D-alanine ligase A (ddlA) from Salmonella typhi.